The following is a 64-amino-acid chain: Orcokinin peptides (64 aa).

2 consecutive propeptides follow at residues 1-6 (MNIRPG) and 23-24 (NI).

The protein belongs to the orcokinin family. Orcokinin-3 is expressed throughout the central nervous system (at protein level).

The protein localises to the secreted. Myotropic peptides. The sequence is that of Orcokinin peptides from Camponotus floridanus (Florida carpenter ant).